The following is a 251-amino-acid chain: Adapter protein MecA (251 aa).

Belongs to the MecA family. In terms of assembly, homodimer.

In terms of biological role, enables the recognition and targeting of unfolded and aggregated proteins to the ClpC protease or to other proteins involved in proteolysis. The polypeptide is Adapter protein MecA (Streptococcus agalactiae serotype III (strain NEM316)).